The chain runs to 166 residues: PTS system glucose-specific EIIA component (166 aa).

Positions 34-138 (DPVFAQKMMG…SVISPIIITN (105 aa)) constitute a PTS EIIA type-1 domain. Zn(2+)-binding residues include His71 and His86. The active-site Tele-phosphohistidine intermediate; for EIIA activity is His86. His86 is subject to Phosphohistidine; by HPr.

As to quaternary structure, heterodimer with glycerol kinase (glpk). Zn(2+) serves as cofactor.

It localises to the cytoplasm. Functionally, the phosphoenolpyruvate-dependent sugar phosphotransferase system (sugar PTS), a major carbohydrate active transport system, catalyzes the phosphorylation of incoming sugar substrates concomitantly with their translocation across the cell membrane. The enzyme II complex composed of PtsG and Crr is involved in glucose transport. The polypeptide is PTS system glucose-specific EIIA component (crr) (Staphylococcus aureus (strain MRSA252)).